A 300-amino-acid polypeptide reads, in one-letter code: 4-hydroxy-tetrahydrodipicolinate synthase (300 aa).

A pyruvate-binding site is contributed by Thr49. Tyr137 serves as the catalytic Proton donor/acceptor. Lys166 acts as the Schiff-base intermediate with substrate in catalysis. Ile208 lines the pyruvate pocket.

This sequence belongs to the DapA family. As to quaternary structure, homotetramer; dimer of dimers.

It is found in the cytoplasm. It catalyses the reaction L-aspartate 4-semialdehyde + pyruvate = (2S,4S)-4-hydroxy-2,3,4,5-tetrahydrodipicolinate + H2O + H(+). Its pathway is amino-acid biosynthesis; L-lysine biosynthesis via DAP pathway; (S)-tetrahydrodipicolinate from L-aspartate: step 3/4. Functionally, catalyzes the condensation of (S)-aspartate-beta-semialdehyde [(S)-ASA] and pyruvate to 4-hydroxy-tetrahydrodipicolinate (HTPA). The protein is 4-hydroxy-tetrahydrodipicolinate synthase of Methanopyrus kandleri (strain AV19 / DSM 6324 / JCM 9639 / NBRC 100938).